Reading from the N-terminus, the 152-residue chain is Glutamyl-tRNA(Gln) amidotransferase subunit F, mitochondrial (152 aa).

The protein belongs to the GatF family. In terms of assembly, subunit of the heterotrimeric GatFAB amidotransferase (AdT) complex, composed of A, B and F subunits.

Its subcellular location is the mitochondrion inner membrane. It catalyses the reaction L-glutamyl-tRNA(Gln) + L-glutamine + ATP + H2O = L-glutaminyl-tRNA(Gln) + L-glutamate + ADP + phosphate + H(+). In terms of biological role, allows the formation of correctly charged Gln-tRNA(Gln) through the transamidation of misacylated Glu-tRNA(Gln) in the mitochondria. The reaction takes place in the presence of glutamine and ATP through an activated gamma-phospho-Glu-tRNA(Gln). Required for proper protein synthesis within the mitochondrion. The polypeptide is Glutamyl-tRNA(Gln) amidotransferase subunit F, mitochondrial (Komagataella phaffii (strain GS115 / ATCC 20864) (Yeast)).